The sequence spans 245 residues: tRNA1(Val) (adenine(37)-N6)-methyltransferase (245 aa).

Belongs to the methyltransferase superfamily. tRNA (adenine-N(6)-)-methyltransferase family.

The protein resides in the cytoplasm. The catalysed reaction is adenosine(37) in tRNA1(Val) + S-adenosyl-L-methionine = N(6)-methyladenosine(37) in tRNA1(Val) + S-adenosyl-L-homocysteine + H(+). In terms of biological role, specifically methylates the adenine in position 37 of tRNA(1)(Val) (anticodon cmo5UAC). In Escherichia coli O139:H28 (strain E24377A / ETEC), this protein is tRNA1(Val) (adenine(37)-N6)-methyltransferase.